We begin with the raw amino-acid sequence, 257 residues long: Methylthioribulose-1-phosphate dehydratase (257 aa).

The segment at 1–33 (MVSSQEKMASISDIIQKDEDSGSEKTESQDKEH) is disordered. Over residues 15 to 33 (IQKDEDSGSEKTESQDKEH) the composition is skewed to basic and acidic residues. Position 107 (Cys-107) interacts with substrate. Zn(2+)-binding residues include His-125 and His-127. The active-site Proton donor/acceptor is Glu-149. His-205 lines the Zn(2+) pocket.

It belongs to the aldolase class II family. MtnB subfamily. It depends on Zn(2+) as a cofactor.

It localises to the cytoplasm. It catalyses the reaction 5-(methylsulfanyl)-D-ribulose 1-phosphate = 5-methylsulfanyl-2,3-dioxopentyl phosphate + H2O. The protein operates within amino-acid biosynthesis; L-methionine biosynthesis via salvage pathway; L-methionine from S-methyl-5-thio-alpha-D-ribose 1-phosphate: step 2/6. In terms of biological role, catalyzes the dehydration of methylthioribulose-1-phosphate (MTRu-1-P) into 2,3-diketo-5-methylthiopentyl-1-phosphate (DK-MTP-1-P). Functions in the methionine salvage pathway. May play a role in apoptosis. The sequence is that of Methylthioribulose-1-phosphate dehydratase from Esox lucius (Northern pike).